We begin with the raw amino-acid sequence, 529 residues long: Bifunctional purine biosynthesis protein PurH (529 aa).

Residues 1 to 148 (MQPPRPVRRA…KNHKDVAIVV (148 aa)) enclose the MGS-like domain.

It belongs to the PurH family.

It catalyses the reaction (6R)-10-formyltetrahydrofolate + 5-amino-1-(5-phospho-beta-D-ribosyl)imidazole-4-carboxamide = 5-formamido-1-(5-phospho-D-ribosyl)imidazole-4-carboxamide + (6S)-5,6,7,8-tetrahydrofolate. It carries out the reaction IMP + H2O = 5-formamido-1-(5-phospho-D-ribosyl)imidazole-4-carboxamide. Its pathway is purine metabolism; IMP biosynthesis via de novo pathway; 5-formamido-1-(5-phospho-D-ribosyl)imidazole-4-carboxamide from 5-amino-1-(5-phospho-D-ribosyl)imidazole-4-carboxamide (10-formyl THF route): step 1/1. It functions in the pathway purine metabolism; IMP biosynthesis via de novo pathway; IMP from 5-formamido-1-(5-phospho-D-ribosyl)imidazole-4-carboxamide: step 1/1. This is Bifunctional purine biosynthesis protein PurH from Sodalis glossinidius (strain morsitans).